A 290-amino-acid chain; its full sequence is Arylamine N-acetyltransferase 1 (290 aa).

The residue at position 1 (methionine 1) is an N-acetylmethionine. The active-site Acyl-thioester intermediate is the cysteine 68. A CoA-binding site is contributed by serine 103. 106-107 (IH) contributes to the substrate binding site. Catalysis depends on residues histidine 107 and aspartate 122. Positions 208 and 287 each coordinate CoA.

Belongs to the arylamine N-acetyltransferase family.

The protein localises to the cytoplasm. It carries out the reaction an arylamine + acetyl-CoA = an N-acetylarylamine + CoA. In terms of biological role, participates in the detoxification of a plethora of hydrazine and arylamine drugs. The protein is Arylamine N-acetyltransferase 1 (NAT1) of Mesocricetus auratus (Golden hamster).